Reading from the N-terminus, the 286-residue chain is Bifunctional protein FolD 2 (286 aa).

NADP(+)-binding positions include 165 to 167, T192, and I233; that span reads GRG.

Belongs to the tetrahydrofolate dehydrogenase/cyclohydrolase family. In terms of assembly, homodimer.

The enzyme catalyses (6R)-5,10-methylene-5,6,7,8-tetrahydrofolate + NADP(+) = (6R)-5,10-methenyltetrahydrofolate + NADPH. It catalyses the reaction (6R)-5,10-methenyltetrahydrofolate + H2O = (6R)-10-formyltetrahydrofolate + H(+). It functions in the pathway one-carbon metabolism; tetrahydrofolate interconversion. Catalyzes the oxidation of 5,10-methylenetetrahydrofolate to 5,10-methenyltetrahydrofolate and then the hydrolysis of 5,10-methenyltetrahydrofolate to 10-formyltetrahydrofolate. The sequence is that of Bifunctional protein FolD 2 from Salinispora tropica (strain ATCC BAA-916 / DSM 44818 / JCM 13857 / NBRC 105044 / CNB-440).